Here is a 707-residue protein sequence, read N- to C-terminus: UvrABC system protein C (707 aa).

One can recognise a GIY-YIG domain in the interval alanine 14–valine 94. The region spanning glycine 206–serine 241 is the UVR domain. Residues proline 654–alanine 684 are disordered. Residues proline 658–alanine 684 show a composition bias toward low complexity.

It belongs to the UvrC family. Interacts with UvrB in an incision complex.

It is found in the cytoplasm. Functionally, the UvrABC repair system catalyzes the recognition and processing of DNA lesions. UvrC both incises the 5' and 3' sides of the lesion. The N-terminal half is responsible for the 3' incision and the C-terminal half is responsible for the 5' incision. The polypeptide is UvrABC system protein C (Anaeromyxobacter dehalogenans (strain 2CP-C)).